The primary structure comprises 206 residues: Flavin reductase (NADPH) (206 aa).

NADP(+) contacts are provided by Gly-10, Thr-12, Gly-13, Thr-15, Arg-35, Ser-38, and Arg-39. At Ser-42 the chain carries Phosphoserine. The NADP(+) site is built by Asp-54, Val-55, Leu-75, and Gly-76. Ser-82 carries the phosphoserine modification. 5 residues coordinate NADP(+): Met-87, Cys-109, His-132, His-153, and Ile-154. The active-site S-nitroso-cysteine intermediate; for S-nitroso-CoA-dependent nitrosyltransferase activity is the Cys-109. Catalysis depends on Cys-188, which acts as the S-nitroso-cysteine intermediate; for S-nitroso-CoA-dependent nitrosyltransferase activity.

It belongs to the BLVRB family. In terms of assembly, monomer.

The protein resides in the cytoplasm. The enzyme catalyses reduced riboflavin + NADP(+) = riboflavin + NADPH + 2 H(+). The catalysed reaction is bilirubin IXbeta + NADP(+) = biliverdin IXbeta + NADPH + H(+). It carries out the reaction FMNH2 + NAD(+) = FMN + NADH + 2 H(+). It catalyses the reaction FMNH2 + NADP(+) = FMN + NADPH + 2 H(+). The enzyme catalyses S-nitroso-CoA + L-cysteinyl-[protein] = S-nitroso-L-cysteinyl-[protein] + CoA. The catalysed reaction is L-cysteinyl-[SCAN] + S-nitroso-CoA = S-nitroso-L-cysteinyl-[SCAN] + CoA. It carries out the reaction S-nitroso-L-cysteinyl-[SCAN] + L-cysteinyl-[protein] = L-cysteinyl-[SCAN] + S-nitroso-L-cysteinyl-[protein]. In terms of biological role, enzyme that can both act as a NAD(P)H-dependent reductase and a S-nitroso-CoA-dependent nitrosyltransferase. Promotes fetal heme degradation during development. Also expressed in adult tissues, where it acts as a regulator of hematopoiesis, intermediary metabolism (glutaminolysis, glycolysis, TCA cycle and pentose phosphate pathway) and insulin signaling. Has a broad specificity oxidoreductase activity by catalyzing the NAD(P)H-dependent reduction of a variety of flavins, such as riboflavin, FAD or FMN, biliverdins, methemoglobin and PQQ (pyrroloquinoline quinone). Contributes to fetal heme catabolism by catalyzing reduction of biliverdin IXbeta into bilirubin IXbeta in the liver. Biliverdin IXbeta, which constitutes the major heme catabolite in the fetus is not present in adult. Does not reduce bilirubin IXalpha. Can also reduce the complexed Fe(3+) iron to Fe(2+) in the presence of FMN and NADPH. Acts as a protein nitrosyltransferase by catalyzing nitrosylation of cysteine residues of target proteins, such as HMOX2, INSR and IRS1. S-nitroso-CoA-dependent nitrosyltransferase activity is mediated via a 'ping-pong' mechanism: BLVRB first associates with both S-nitroso-CoA and protein substrate, nitric oxide group is then transferred from S-nitroso-CoA to Cys-109 and Cys-188 residues of BLVRB and from S-nitroso-BLVRB to the protein substrate. Inhibits insulin signaling by mediating nitrosylation of INSR and IRS1, leading to their inhibition. The sequence is that of Flavin reductase (NADPH) (Blvrb) from Mus musculus (Mouse).